Reading from the N-terminus, the 1171-residue chain is MVASSTSNVNNATAINADSTDGATRRLSFAKIHEPLDVPNLLALQTDSFDWLVGNERWQARVAKAVEEGDLSVATSSGLSDIFEEISPIEDFQGTMSLSFSDPEFADPKYTMAECKDRDATYSAPLYVKAEFMNNNTGEIKQQTVFMGDFPLMTEKGTFVVNGTERVVVSQLVRSPGAYFERTADKTSDKDIFTAKIIPSRGAWFELEIDKRDQVGVRLDRKRKQSVTVLLKALGWTEGQILEEFGQYDSMRATLEKDATETREDALLDIYRKLRPGEPPTVEAAQSLLDNLYFNSKRYDLAKVGRYKINRKLGIDRSLGDKEASVLHVEDIVAMIKFLVALHAGEKTLTGKRDGQDHELRVEIDDIDHFGNRRIRAVGELIENQVRTGLSRMERVVRERMTTQDVEAITPQTLINIRPVVAAIKEFFGTSQLSQFMDQNNPLSGLTHKRRLSALGPGGLSRDRAGMEVRDVHPSHYGRMCPIETPEGPNIGLIGSLASYGRINPFGFIETPYRLVSEGVVSDEVQYLTADDEAEVLIAQANAPLDENKKFAEETVLVRARGGGGEPVLVPAADVEFMDVSPRQMVSVATALIPFLEHDDANRALMGANMQRQAVPLVRSEAPFVGTGMERAAAVDAGDVVIAKKAGVVTEVSAELVIMLNDDGTETNYRINKFARSNQGNCYNHRVLVSEGQRLEVGGIIADGPATDQGELALGKNLLVAFMSWEGHNFEDAIILSQRIVAEDVLSSIHIEEHEIDARDTKLGAEEITRDIPNVSEEVLAGLDERGIIHIGAEVEAGDILVGKVTPKGETELTPEERLLRAIFGEKSREVRDTSLKVPHGESGTVIGVRVFDRDNDDELPPGVNQLVRVYVAAKRKITDGDKLAGRHGNKGVISKILPIEDMPFLADGTPVDIVLNPLGVPGRMNVGQVLETHLGWVAKTGWKIEGEPEWVKQLPNLPRESGSTTVATPVFDGAREEEITGLLDSTNVTRDGDRLINSSGKTRLFDGRSGEPFPDPISVGYMYILKLHHLVDDKIHARSTGPYSMITQQPLGGKAQFGGQRFGEMEVWALEAYGAAYTLQELLTIKSDDIHGRVKVYEAIVKGENIPEPGVPESFKVLIKEMQSLCLNVEVLSTDGTTIEMRDSDDAVFTAAEELGIDLSRAEPSSVEEV.

It belongs to the RNA polymerase beta chain family. In terms of assembly, the RNAP catalytic core consists of 2 alpha, 1 beta, 1 beta' and 1 omega subunit. When a sigma factor is associated with the core the holoenzyme is formed, which can initiate transcription.

It catalyses the reaction RNA(n) + a ribonucleoside 5'-triphosphate = RNA(n+1) + diphosphate. Functionally, DNA-dependent RNA polymerase catalyzes the transcription of DNA into RNA using the four ribonucleoside triphosphates as substrates. The polypeptide is DNA-directed RNA polymerase subunit beta (Arthrobacter sp. (strain FB24)).